An 843-amino-acid polypeptide reads, in one-letter code: Structure-specific endonuclease subunit SLX4 (843 aa).

Disordered stretches follow at residues 26–111 (SPPS…KTTT), 281–313 (AIPT…QKGK), 339–377 (NVAP…NGPP), 603–655 (SKTF…AKAL), and 729–748 (ATPN…FSIE). 2 stretches are compositionally biased toward polar residues: residues 50 to 69 (ASFS…NGEN) and 285 to 301 (PTES…SSKQ). The segment covering 302–311 (QRVKAKKPQK) has biased composition (basic residues). Polar residues-rich tracts occupy residues 349-372 (NISN…TLKN) and 603-616 (SKTF…NQGT). Over residues 617 to 636 (DDARKNGFRKENHSDVRVRP) the composition is skewed to basic and acidic residues. Residues 739–748 (RSSSTSFSIE) show a composition bias toward low complexity.

This sequence belongs to the SLX4 family. In terms of assembly, forms a heterodimer with SLX1. Phosphorylated in response to DNA damage.

Its subcellular location is the nucleus. Functionally, regulatory subunit of the SLX1-SLX4 structure-specific endonuclease that resolves DNA secondary structures generated during DNA repair and recombination. Has endonuclease activity towards branched DNA substrates, introducing single-strand cuts in duplex DNA close to junctions with ss-DNA. The protein is Structure-specific endonuclease subunit SLX4 of Ajellomyces capsulatus (strain G186AR / H82 / ATCC MYA-2454 / RMSCC 2432) (Darling's disease fungus).